Here is a 145-residue protein sequence, read N- to C-terminus: Protein H2A.5 (145 aa).

Residues 118-145 (SPAAAEKEAKSQKAAAKSPKKKTAATKE) form a disordered region. The SPKK motif motif lies at 135–138 (SPKK). The span at 135 to 145 (SPKKKTAATKE) shows a compositional bias: basic residues.

This sequence belongs to the histone H2A family. As to quaternary structure, the nucleosome is a histone octamer containing two molecules each of H2A, H2B, H3 and H4 assembled in one H3-H4 heterotetramer and two H2A-H2B heterodimers. The octamer wraps approximately 147 bp of DNA. In terms of tissue distribution, abundant in meristematic tissues.

It is found in the nucleus. It localises to the chromosome. Core component of nucleosome. Nucleosomes wrap and compact DNA into chromatin, limiting DNA accessibility to the cellular machineries which require DNA as a template. Histones thereby play a central role in transcription regulation, DNA repair, DNA replication and chromosomal stability. DNA accessibility is regulated via a complex set of post-translational modifications of histones, also called histone code, and nucleosome remodeling. The chain is Protein H2A.5 (H2A-2) from Triticum aestivum (Wheat).